The primary structure comprises 293 residues: MTVHTAAEKAYILSEALPYIQRFYDKTIVIKYGGNAMTERHLMEAFAKDVVLLKLVGMNPVVVHGGGPQIAGLLQRIGKQSEFIQGMRVTDEETLDVVEMVLGGLVNQDIVTLINKHGGRAVGLTGKDGNFIHAKKMLVKSKEKADEMLDIGQVGEITGIDPEIIQVLDARDFIPVVAPLGTDAEGNAYNINADVAAGKIAGVLQAEKVIFMTNTPGVLDKDKKLLTGLTPREISDLIADDTISGGMIPKVGYAVDAVNSGVKTAHIIDGRVEHALLLEVLTPEGVGTLIKRS.

Residues 66–67, Arg-88, and Asn-190 contribute to the substrate site; that span reads GG.

This sequence belongs to the acetylglutamate kinase family. ArgB subfamily.

It localises to the cytoplasm. The catalysed reaction is N-acetyl-L-glutamate + ATP = N-acetyl-L-glutamyl 5-phosphate + ADP. It functions in the pathway amino-acid biosynthesis; L-arginine biosynthesis; N(2)-acetyl-L-ornithine from L-glutamate: step 2/4. In terms of biological role, catalyzes the ATP-dependent phosphorylation of N-acetyl-L-glutamate. This chain is Acetylglutamate kinase, found in Thiobacillus denitrificans (strain ATCC 25259 / T1).